The chain runs to 130 residues: MFAVIKTGGKQYRVAANDVITVATLEGEAGAAVTFGDVLLFTDGDATQVGTPLLSGIGVTGEIVQHGRTRKVIAFKKRRRQNSRRRRGHRQDFTVVRITEISAGGKTSKAEPRKTRKAEPAAESAPAAAE.

The disordered stretch occupies residues Ala103–Glu130. Basic and acidic residues predominate over residues Ser108–Pro120. Residues Ala121–Glu130 are compositionally biased toward low complexity.

It belongs to the bacterial ribosomal protein bL21 family. Part of the 50S ribosomal subunit. Contacts protein L20.

Its function is as follows. This protein binds to 23S rRNA in the presence of protein L20. This is Large ribosomal subunit protein bL21 from Methylorubrum extorquens (strain CM4 / NCIMB 13688) (Methylobacterium extorquens).